A 258-amino-acid chain; its full sequence is Ubiquinone/menaquinone biosynthesis C-methyltransferase UbiE (258 aa).

Residues threonine 81, aspartate 102, and 130–131 (NA) contribute to the S-adenosyl-L-methionine site.

Belongs to the class I-like SAM-binding methyltransferase superfamily. MenG/UbiE family.

It catalyses the reaction a 2-demethylmenaquinol + S-adenosyl-L-methionine = a menaquinol + S-adenosyl-L-homocysteine + H(+). It carries out the reaction a 2-methoxy-6-(all-trans-polyprenyl)benzene-1,4-diol + S-adenosyl-L-methionine = a 5-methoxy-2-methyl-3-(all-trans-polyprenyl)benzene-1,4-diol + S-adenosyl-L-homocysteine + H(+). The protein operates within quinol/quinone metabolism; menaquinone biosynthesis; menaquinol from 1,4-dihydroxy-2-naphthoate: step 2/2. It functions in the pathway cofactor biosynthesis; ubiquinone biosynthesis. Functionally, methyltransferase required for the conversion of demethylmenaquinol (DMKH2) to menaquinol (MKH2) and the conversion of 2-polyprenyl-6-methoxy-1,4-benzoquinol (DDMQH2) to 2-polyprenyl-3-methyl-6-methoxy-1,4-benzoquinol (DMQH2). This chain is Ubiquinone/menaquinone biosynthesis C-methyltransferase UbiE, found in Allorhizobium ampelinum (strain ATCC BAA-846 / DSM 112012 / S4) (Agrobacterium vitis (strain S4)).